Here is a 498-residue protein sequence, read N- to C-terminus: ATP synthase subunit beta, chloroplastic (498 aa).

172 to 179 (GGAGVGKT) lines the ATP pocket.

It belongs to the ATPase alpha/beta chains family. As to quaternary structure, F-type ATPases have 2 components, CF(1) - the catalytic core - and CF(0) - the membrane proton channel. CF(1) has five subunits: alpha(3), beta(3), gamma(1), delta(1), epsilon(1). CF(0) has four main subunits: a(1), b(1), b'(1) and c(9-12).

The protein resides in the plastid. Its subcellular location is the chloroplast thylakoid membrane. It catalyses the reaction ATP + H2O + 4 H(+)(in) = ADP + phosphate + 5 H(+)(out). Its function is as follows. Produces ATP from ADP in the presence of a proton gradient across the membrane. The catalytic sites are hosted primarily by the beta subunits. The polypeptide is ATP synthase subunit beta, chloroplastic (Oenothera biennis (German evening primrose)).